A 150-amino-acid chain; its full sequence is 3-hydroxyacyl-[acyl-carrier-protein] dehydratase FabZ (150 aa).

H51 is a catalytic residue.

The protein belongs to the thioester dehydratase family. FabZ subfamily.

It localises to the cytoplasm. The catalysed reaction is a (3R)-hydroxyacyl-[ACP] = a (2E)-enoyl-[ACP] + H2O. In terms of biological role, involved in unsaturated fatty acids biosynthesis. Catalyzes the dehydration of short chain beta-hydroxyacyl-ACPs and long chain saturated and unsaturated beta-hydroxyacyl-ACPs. This chain is 3-hydroxyacyl-[acyl-carrier-protein] dehydratase FabZ, found in Geobacter metallireducens (strain ATCC 53774 / DSM 7210 / GS-15).